A 328-amino-acid polypeptide reads, in one-letter code: MIEKIWFDNHFLGKLLWPLLWPLSCLFKWIATKRKSDYQSGKKQSYRSSVPVVVVGNITAGGNGKTPVVVWLVEQLQSKGYKVGVASRGYGGKAPHYPYLLTETTTPDISGDEPVLIKQRTKAEVAVAPVRSEAVKMLEQQGVDFIITDDGLQHYALQRDIEFIVIDGKRRFGNQHYIPLGPLREGVERLSSVDFLICNGGEPQENEVSMRLQPSEAINLVTGERRSVSSLSNLVAFAGIGHPPRFFETLNQLKANVVHTQGFEDHKAFEPTEIEQLMQYGEQLIMTEKDAVKCQSFAQSSWWYLPVDATFPEEKAQQILNKIIEVKE.

59–66 (TAGGNGKT) is a binding site for ATP.

It belongs to the LpxK family.

The enzyme catalyses a lipid A disaccharide + ATP = a lipid IVA + ADP + H(+). It participates in glycolipid biosynthesis; lipid IV(A) biosynthesis; lipid IV(A) from (3R)-3-hydroxytetradecanoyl-[acyl-carrier-protein] and UDP-N-acetyl-alpha-D-glucosamine: step 6/6. Its function is as follows. Transfers the gamma-phosphate of ATP to the 4'-position of a tetraacyldisaccharide 1-phosphate intermediate (termed DS-1-P) to form tetraacyldisaccharide 1,4'-bis-phosphate (lipid IVA). This chain is Tetraacyldisaccharide 4'-kinase, found in Aliivibrio fischeri (strain MJ11) (Vibrio fischeri).